The chain runs to 238 residues: tRNA (guanine-N(1)-)-methyltransferase (238 aa).

S-adenosyl-L-methionine is bound by residues glycine 109 and 129-134 (IGDFVL).

Belongs to the RNA methyltransferase TrmD family. Homodimer.

It localises to the cytoplasm. It catalyses the reaction guanosine(37) in tRNA + S-adenosyl-L-methionine = N(1)-methylguanosine(37) in tRNA + S-adenosyl-L-homocysteine + H(+). Functionally, specifically methylates guanosine-37 in various tRNAs. This Exiguobacterium sp. (strain ATCC BAA-1283 / AT1b) protein is tRNA (guanine-N(1)-)-methyltransferase.